A 960-amino-acid chain; its full sequence is Chromo domain-containing protein 1 (960 aa).

The Chromo domain occupies 22 to 74 (YEVEDILADRVNKNGINEYYIKWAGYDWYDNTWEPEQNLFGAEKVLKKWKKRK).

In terms of assembly, ago1, chp1 and tas3 interact to form the core of the RNA-induced transcriptional silencing (RITS) complex. The RITS complex interacts with the RDRC complex via interaction between ago1 and hrr1. Clr4 has a role in mediating this interaction. Interacts with dri1.

It localises to the nucleus. The protein resides in the cytoplasm. Its subcellular location is the cytoskeleton. It is found in the microtubule organizing center. The protein localises to the spindle pole body. In terms of biological role, component of the kinetochore which plays a role in stabilizing microtubules and so allowing accurate chromosome segregation. Has a role in the RNA interference (RNAi) pathway which is important for heterochromatin formation and accurate chromosome segregation. A member of the RNA-induced transcriptional silencing (RITS) complex which is involved in the biosynthesis of dsRNA from primer siRNAs provided by the RNA-directed RNA polymerase (RDRC) complex. The chain is Chromo domain-containing protein 1 from Schizosaccharomyces pombe (strain 972 / ATCC 24843) (Fission yeast).